The chain runs to 166 residues: Lithostathine-1-beta (166 aa).

Residues 1–22 (MAQTNSFFMLISSLMFLSLSQG) form the signal peptide. O-linked (GalNAc...) threonine glycosylation occurs at T27. Residues 34-164 (ISCPEGTNAY…EKKFSFVCKF (131 aa)) enclose the C-type lectin domain. 3 disulfide bridges follow: C36–C47, C64–C162, and C137–C154.

In terms of processing, all O-linked glycans consist of Gal-GlcNAc-Gal-GalNAc tetrasaccharide core and get elongated (microheterogeneity).

The protein resides in the secreted. Its function is as follows. Might act as an inhibitor of spontaneous calcium carbonate precipitation. May be associated with neuronal sprouting in brain, and with brain and pancreas regeneration. The sequence is that of Lithostathine-1-beta (REG1B) from Homo sapiens (Human).